The sequence spans 288 residues: 4-diphosphocytidyl-2-C-methyl-D-erythritol kinase (288 aa).

Residue K8 is part of the active site. An ATP-binding site is contributed by P90–S100. D132 is a catalytic residue.

The protein belongs to the GHMP kinase family. IspE subfamily.

It catalyses the reaction 4-CDP-2-C-methyl-D-erythritol + ATP = 4-CDP-2-C-methyl-D-erythritol 2-phosphate + ADP + H(+). Its pathway is isoprenoid biosynthesis; isopentenyl diphosphate biosynthesis via DXP pathway; isopentenyl diphosphate from 1-deoxy-D-xylulose 5-phosphate: step 3/6. In terms of biological role, catalyzes the phosphorylation of the position 2 hydroxy group of 4-diphosphocytidyl-2C-methyl-D-erythritol. In Chlamydia trachomatis serovar D (strain ATCC VR-885 / DSM 19411 / UW-3/Cx), this protein is 4-diphosphocytidyl-2-C-methyl-D-erythritol kinase.